The chain runs to 330 residues: Aspartate--ammonia ligase (330 aa).

It belongs to the class-II aminoacyl-tRNA synthetase family. AsnA subfamily.

The protein localises to the cytoplasm. The catalysed reaction is L-aspartate + NH4(+) + ATP = L-asparagine + AMP + diphosphate + H(+). The protein operates within amino-acid biosynthesis; L-asparagine biosynthesis; L-asparagine from L-aspartate (ammonia route): step 1/1. The sequence is that of Aspartate--ammonia ligase from Escherichia coli O45:K1 (strain S88 / ExPEC).